The primary structure comprises 165 residues: U11/U12 small nuclear ribonucleoprotein 25 kDa protein (165 aa).

The region spanning 52–137 (MRLSVVKLDG…IRNNSQVTFM (86 aa)) is the Ubiquitin-like domain. The segment at 145 to 165 (RGRHSKRKKHRLFRSLHKTSS) is disordered.

As to quaternary structure, component of the U11/U12 snRNPs that are part of the U12-type spliceosome.

The protein localises to the nucleus. This is U11/U12 small nuclear ribonucleoprotein 25 kDa protein (SNRNP25) from Arabidopsis thaliana (Mouse-ear cress).